The following is a 263-amino-acid chain: Endonuclease 8 (263 aa).

The active-site Schiff-base intermediate with DNA is P2. E3 (proton donor) is an active-site residue. K53 (proton donor; for beta-elimination activity) is an active-site residue. Residues Q70, R125, and N169 each coordinate DNA. The segment at 229-263 (KVFHRDGEPCERCGGIIEKTTLSSRPFYWCPGCQH) adopts an FPG-type zinc-finger fold. Catalysis depends on R253, which acts as the Proton donor; for delta-elimination activity.

The protein belongs to the FPG family. It depends on Zn(2+) as a cofactor.

It carries out the reaction 2'-deoxyribonucleotide-(2'-deoxyribose 5'-phosphate)-2'-deoxyribonucleotide-DNA = a 3'-end 2'-deoxyribonucleotide-(2,3-dehydro-2,3-deoxyribose 5'-phosphate)-DNA + a 5'-end 5'-phospho-2'-deoxyribonucleoside-DNA + H(+). In terms of biological role, involved in base excision repair of DNA damaged by oxidation or by mutagenic agents. Acts as a DNA glycosylase that recognizes and removes damaged bases. Has a preference for oxidized pyrimidines, such as thymine glycol, 5,6-dihydrouracil and 5,6-dihydrothymine. Has AP (apurinic/apyrimidinic) lyase activity and introduces nicks in the DNA strand. Cleaves the DNA backbone by beta-delta elimination to generate a single-strand break at the site of the removed base with both 3'- and 5'-phosphates. This is Endonuclease 8 from Escherichia coli O127:H6 (strain E2348/69 / EPEC).